A 296-amino-acid polypeptide reads, in one-letter code: Formamidopyrimidine-DNA glycosylase (296 aa).

Catalysis depends on proline 2, which acts as the Schiff-base intermediate with DNA. Glutamate 3 serves as the catalytic Proton donor. Lysine 58 serves as the catalytic Proton donor; for beta-elimination activity. The DNA site is built by histidine 106, arginine 125, and lysine 168. An FPG-type zinc finger spans residues 259–295 (RVYDRVGHACPTKGCTGRIGRIVQGGRSTFFCETCQV). The active-site Proton donor; for delta-elimination activity is arginine 285.

It belongs to the FPG family. Monomer. Requires Zn(2+) as cofactor.

The catalysed reaction is Hydrolysis of DNA containing ring-opened 7-methylguanine residues, releasing 2,6-diamino-4-hydroxy-5-(N-methyl)formamidopyrimidine.. The enzyme catalyses 2'-deoxyribonucleotide-(2'-deoxyribose 5'-phosphate)-2'-deoxyribonucleotide-DNA = a 3'-end 2'-deoxyribonucleotide-(2,3-dehydro-2,3-deoxyribose 5'-phosphate)-DNA + a 5'-end 5'-phospho-2'-deoxyribonucleoside-DNA + H(+). Involved in base excision repair of DNA damaged by oxidation or by mutagenic agents. Acts as a DNA glycosylase that recognizes and removes damaged bases. Has a preference for oxidized purines, such as 7,8-dihydro-8-oxoguanine (8-oxoG). Has AP (apurinic/apyrimidinic) lyase activity and introduces nicks in the DNA strand. Cleaves the DNA backbone by beta-delta elimination to generate a single-strand break at the site of the removed base with both 3'- and 5'-phosphates. The sequence is that of Formamidopyrimidine-DNA glycosylase from Methylorubrum populi (strain ATCC BAA-705 / NCIMB 13946 / BJ001) (Methylobacterium populi).